The primary structure comprises 431 residues: UDP-N-acetylglucosamine 1-carboxyvinyltransferase (431 aa).

Lys22 to Asn23 lines the phosphoenolpyruvate pocket. Arg102 contacts UDP-N-acetyl-alpha-D-glucosamine. Cys126 serves as the catalytic Proton donor. Position 126 is a 2-(S-cysteinyl)pyruvic acid O-phosphothioketal (Cys126). 2 residues coordinate UDP-N-acetyl-alpha-D-glucosamine: Asp318 and Ile340.

It belongs to the EPSP synthase family. MurA subfamily.

It is found in the cytoplasm. The enzyme catalyses phosphoenolpyruvate + UDP-N-acetyl-alpha-D-glucosamine = UDP-N-acetyl-3-O-(1-carboxyvinyl)-alpha-D-glucosamine + phosphate. It participates in cell wall biogenesis; peptidoglycan biosynthesis. Functionally, cell wall formation. Adds enolpyruvyl to UDP-N-acetylglucosamine. The polypeptide is UDP-N-acetylglucosamine 1-carboxyvinyltransferase (Bartonella quintana (strain Toulouse) (Rochalimaea quintana)).